A 376-amino-acid chain; its full sequence is Queuine tRNA-ribosyltransferase (376 aa).

Residue Asp90 is the Proton acceptor of the active site. Substrate contacts are provided by residues 90 to 94 (DSGGF), Asp144, Gln193, and Gly220. The segment at 251–257 (GVGTPED) is RNA binding. Asp270 serves as the catalytic Nucleophile. Residues 275–279 (TRNAR) are RNA binding; important for wobble base 34 recognition. 4 residues coordinate Zn(2+): Cys308, Cys310, Cys313, and His339.

The protein belongs to the queuine tRNA-ribosyltransferase family. As to quaternary structure, homodimer. Within each dimer, one monomer is responsible for RNA recognition and catalysis, while the other monomer binds to the replacement base PreQ1. Requires Zn(2+) as cofactor.

The enzyme catalyses 7-aminomethyl-7-carbaguanine + guanosine(34) in tRNA = 7-aminomethyl-7-carbaguanosine(34) in tRNA + guanine. It functions in the pathway tRNA modification; tRNA-queuosine biosynthesis. Its function is as follows. Catalyzes the base-exchange of a guanine (G) residue with the queuine precursor 7-aminomethyl-7-deazaguanine (PreQ1) at position 34 (anticodon wobble position) in tRNAs with GU(N) anticodons (tRNA-Asp, -Asn, -His and -Tyr). Catalysis occurs through a double-displacement mechanism. The nucleophile active site attacks the C1' of nucleotide 34 to detach the guanine base from the RNA, forming a covalent enzyme-RNA intermediate. The proton acceptor active site deprotonates the incoming PreQ1, allowing a nucleophilic attack on the C1' of the ribose to form the product. After dissociation, two additional enzymatic reactions on the tRNA convert PreQ1 to queuine (Q), resulting in the hypermodified nucleoside queuosine (7-(((4,5-cis-dihydroxy-2-cyclopenten-1-yl)amino)methyl)-7-deazaguanosine). This is Queuine tRNA-ribosyltransferase from Cupriavidus metallidurans (strain ATCC 43123 / DSM 2839 / NBRC 102507 / CH34) (Ralstonia metallidurans).